The primary structure comprises 487 residues: L-tartrate/succinate antiporter (487 aa).

Helical transmembrane passes span 10-30, 33-53, 54-74, 93-113, 137-157, 189-209, 236-256, 292-312, 313-333, 340-360, 370-390, 393-413, 418-438, and 465-485; these read YLAPLAVIAIIALIPVPAGLE, TWLYFAVFTGVIVGLILEPVP, GAVVAMVGISIIAILSPWLLF, WAVSGFSNSVIWLIFAAFMFG, TLFLGYAVMFSELILAPVTPS, IGSYIMWMGIVADCVTSAIFL, FLGMLPLSILLVLLVPWLAYV, LMVGALVLWIFGGDYIDAAMV, GYSVVALMLLLRIISWDDIVS, VFFWLASLITLATGLNNTGFI, SLSGYSPTMVMVALIVVFYLL, FFASATAYTSALAPMMIAAAL, IPLPVFCLMVGAAIGLGSILT, and IFGLIFLVLLVITGLLWMPVV.

This sequence belongs to the SLC13A/DASS transporter (TC 2.A.47) family. DIT1 subfamily.

Its subcellular location is the cell inner membrane. It catalyses the reaction (2R,3R)-tartrate(out) + succinate(in) = (2R,3R)-tartrate(in) + succinate(out). Functionally, catalyzes the uptake of tartrate in exchange for intracellular succinate. Essential for anaerobic L-tartrate fermentation. The chain is L-tartrate/succinate antiporter (ttdT) from Escherichia coli O157:H7.